Here is a 187-residue protein sequence, read N- to C-terminus: Ribosome-recycling factor (187 aa).

The protein belongs to the RRF family.

The protein resides in the cytoplasm. In terms of biological role, responsible for the release of ribosomes from messenger RNA at the termination of protein biosynthesis. May increase the efficiency of translation by recycling ribosomes from one round of translation to another. The protein is Ribosome-recycling factor of Anaeromyxobacter sp. (strain Fw109-5).